The chain runs to 263 residues: Tryptophan synthase alpha chain (263 aa).

Active-site proton acceptor residues include E49 and D60.

The protein belongs to the TrpA family. Tetramer of two alpha and two beta chains.

The catalysed reaction is (1S,2R)-1-C-(indol-3-yl)glycerol 3-phosphate + L-serine = D-glyceraldehyde 3-phosphate + L-tryptophan + H2O. The protein operates within amino-acid biosynthesis; L-tryptophan biosynthesis; L-tryptophan from chorismate: step 5/5. Its function is as follows. The alpha subunit is responsible for the aldol cleavage of indoleglycerol phosphate to indole and glyceraldehyde 3-phosphate. This chain is Tryptophan synthase alpha chain, found in Roseobacter denitrificans (strain ATCC 33942 / OCh 114) (Erythrobacter sp. (strain OCh 114)).